Reading from the N-terminus, the 812-residue chain is Glycerol-3-phosphate acyltransferase (812 aa).

The HXXXXD motif motif lies at 308–313; it reads CHRSHM.

Belongs to the GPAT/DAPAT family.

It is found in the cell inner membrane. The catalysed reaction is sn-glycerol 3-phosphate + an acyl-CoA = a 1-acyl-sn-glycero-3-phosphate + CoA. Its pathway is phospholipid metabolism; CDP-diacylglycerol biosynthesis; CDP-diacylglycerol from sn-glycerol 3-phosphate: step 1/3. This Pseudoalteromonas translucida (strain TAC 125) protein is Glycerol-3-phosphate acyltransferase.